A 500-amino-acid chain; its full sequence is L-arabinose isomerase (500 aa).

Mn(2+) is bound by residues Glu306, Glu333, His349, and His448.

Belongs to the arabinose isomerase family. The cofactor is Mn(2+).

The catalysed reaction is beta-L-arabinopyranose = L-ribulose. The protein operates within carbohydrate degradation; L-arabinose degradation via L-ribulose; D-xylulose 5-phosphate from L-arabinose (bacterial route): step 1/3. Its function is as follows. Catalyzes the conversion of L-arabinose to L-ribulose. This Shewanella sp. (strain MR-7) protein is L-arabinose isomerase.